We begin with the raw amino-acid sequence, 251 residues long: MTSLVSLENVSVSFGQRRVLSDVSLELKPGKILTLLGPNGAGKSTLVRVVLGLVTPDEGVIKRNGKLRIGYVPQKLYLDTTLPLTVNRFLRLRPGTHKEDILPALKRVQAGHLINAPMQKLSGGETQRVLLARALLNCPQLLVLDEPTQGVDVNGQVALYDLIDQLRRELDCGVLMVSHDLHLVMAKTDEVLCLNHHICCSGTPEVVSLHPEFISMFGPRGAEQLGIYRHHHNHRHDLQGRIVLRRGNDRS.

An ABC transporter domain is found at 5 to 220; sequence VSLENVSVSF…PEFISMFGPR (216 aa). ATP is bound at residue 37–44; sequence GPNGAGKS.

Belongs to the ABC transporter superfamily. Zinc importer (TC 3.A.1.15.5) family. The complex is composed of two ATP-binding proteins (ZnuC), two transmembrane proteins (ZnuB) and a solute-binding protein (ZnuA).

Its subcellular location is the cell inner membrane. It catalyses the reaction Zn(2+)(out) + ATP(in) + H2O(in) = Zn(2+)(in) + ADP(in) + phosphate(in) + H(+)(in). Its function is as follows. Part of the ABC transporter complex ZnuABC involved in zinc import. Responsible for energy coupling to the transport system. The sequence is that of Zinc import ATP-binding protein ZnuC from Shigella flexneri serotype 5b (strain 8401).